A 228-amino-acid polypeptide reads, in one-letter code: Interferon-induced transmembrane protein 10 (228 aa).

The Extracellular segment spans residues 1–154 (MREGKRGPPC…PDTTEVNDYY (154 aa)). A disordered region spans residues 29 to 49 (AQGPGQCPAPLGDPASTTDGA). The helical transmembrane segment at 155 to 175 (LWSIFNFVYLNFCCLGFIALA) threads the bilayer. S-palmitoyl cysteine attachment occurs at residues Cys-167 and Cys-168. At 176–200 (YSLKVRDKKLLNDLNGAVEDAKTAR) the chain is on the cytoplasmic side. Residues 201 to 221 (LFNITSSALAASCIILVFIFL) traverse the membrane as a helical segment. Residues 222–228 (RYPLTDY) are Extracellular-facing.

It belongs to the CD225/Dispanin family.

It localises to the cell membrane. The protein is Interferon-induced transmembrane protein 10 (IFITM10) of Homo sapiens (Human).